Consider the following 229-residue polypeptide: Enolase-phosphatase E1 (229 aa).

Belongs to the HAD-like hydrolase superfamily. MasA/MtnC family. In terms of assembly, monomer. It depends on Mg(2+) as a cofactor.

It carries out the reaction 5-methylsulfanyl-2,3-dioxopentyl phosphate + H2O = 1,2-dihydroxy-5-(methylsulfanyl)pent-1-en-3-one + phosphate. It functions in the pathway amino-acid biosynthesis; L-methionine biosynthesis via salvage pathway; L-methionine from S-methyl-5-thio-alpha-D-ribose 1-phosphate: step 3/6. The protein operates within amino-acid biosynthesis; L-methionine biosynthesis via salvage pathway; L-methionine from S-methyl-5-thio-alpha-D-ribose 1-phosphate: step 4/6. Its function is as follows. Bifunctional enzyme that catalyzes the enolization of 2,3-diketo-5-methylthiopentyl-1-phosphate (DK-MTP-1-P) into the intermediate 2-hydroxy-3-keto-5-methylthiopentenyl-1-phosphate (HK-MTPenyl-1-P), which is then dephosphorylated to form the acireductone 1,2-dihydroxy-3-keto-5-methylthiopentene (DHK-MTPene). The chain is Enolase-phosphatase E1 from Yersinia enterocolitica serotype O:8 / biotype 1B (strain NCTC 13174 / 8081).